The following is an 87-amino-acid chain: Small ribosomal subunit protein uS15 (87 aa).

Belongs to the universal ribosomal protein uS15 family. In terms of assembly, part of the 30S ribosomal subunit. Forms a bridge to the 50S subunit in the 70S ribosome, contacting the 23S rRNA.

One of the primary rRNA binding proteins, it binds directly to 16S rRNA where it helps nucleate assembly of the platform of the 30S subunit by binding and bridging several RNA helices of the 16S rRNA. Its function is as follows. Forms an intersubunit bridge (bridge B4) with the 23S rRNA of the 50S subunit in the ribosome. The sequence is that of Small ribosomal subunit protein uS15 from Clostridium kluyveri (strain NBRC 12016).